Reading from the N-terminus, the 178-residue chain is ATP-dependent protease subunit HslV (178 aa).

T7 is a catalytic residue. G162, C165, and T168 together coordinate Na(+).

It belongs to the peptidase T1B family. HslV subfamily. In terms of assembly, a double ring-shaped homohexamer of HslV is capped on each side by a ring-shaped HslU homohexamer. The assembly of the HslU/HslV complex is dependent on binding of ATP.

The protein resides in the cytoplasm. It carries out the reaction ATP-dependent cleavage of peptide bonds with broad specificity.. Allosterically activated by HslU binding. In terms of biological role, protease subunit of a proteasome-like degradation complex believed to be a general protein degrading machinery. The polypeptide is ATP-dependent protease subunit HslV (Burkholderia ambifaria (strain MC40-6)).